The sequence spans 24 residues: M-poneritoxin-Ng1e (24 aa).

Expressed by the venom gland.

The protein localises to the secreted. It localises to the target cell membrane. In terms of biological role, has a broad spectrum of activity against both Gram-positive and Gram-negative bacteria and S.cerevisiae. Has insecticidal and hemolytic activities. May act by disrupting the integrity of the bacterial cell membrane. This is M-poneritoxin-Ng1e from Neoponera goeldii (Ponerine ant).